A 331-amino-acid polypeptide reads, in one-letter code: Lipoyl synthase (331 aa).

Residues 1–14 (MSTQLDASQPSNDV) are compositionally biased toward polar residues. Positions 1-32 (MSTQLDASQPSNDVASPAAYDPTQKQKSQAKT) are disordered. [4Fe-4S] cluster is bound by residues cysteine 78, cysteine 83, cysteine 89, cysteine 104, cysteine 108, cysteine 111, and serine 318. The 219-residue stretch at 89 to 307 (CFGKGTATFM…EREAYAMGFS (219 aa)) folds into the Radical SAM core domain.

This sequence belongs to the radical SAM superfamily. Lipoyl synthase family. Requires [4Fe-4S] cluster as cofactor.

The protein localises to the cytoplasm. The catalysed reaction is [[Fe-S] cluster scaffold protein carrying a second [4Fe-4S](2+) cluster] + N(6)-octanoyl-L-lysyl-[protein] + 2 oxidized [2Fe-2S]-[ferredoxin] + 2 S-adenosyl-L-methionine + 4 H(+) = [[Fe-S] cluster scaffold protein] + N(6)-[(R)-dihydrolipoyl]-L-lysyl-[protein] + 4 Fe(3+) + 2 hydrogen sulfide + 2 5'-deoxyadenosine + 2 L-methionine + 2 reduced [2Fe-2S]-[ferredoxin]. It functions in the pathway protein modification; protein lipoylation via endogenous pathway; protein N(6)-(lipoyl)lysine from octanoyl-[acyl-carrier-protein]: step 2/2. Functionally, catalyzes the radical-mediated insertion of two sulfur atoms into the C-6 and C-8 positions of the octanoyl moiety bound to the lipoyl domains of lipoate-dependent enzymes, thereby converting the octanoylated domains into lipoylated derivatives. The protein is Lipoyl synthase of Bordetella avium (strain 197N).